The primary structure comprises 162 residues: Cyclic pyranopterin monophosphate synthase (162 aa).

Residues 75–77 (LCH) and 113–114 (ME) contribute to the substrate site. Asp-128 is a catalytic residue.

This sequence belongs to the MoaC family. As to quaternary structure, homohexamer; trimer of dimers.

It catalyses the reaction (8S)-3',8-cyclo-7,8-dihydroguanosine 5'-triphosphate = cyclic pyranopterin phosphate + diphosphate. It participates in cofactor biosynthesis; molybdopterin biosynthesis. Its function is as follows. Catalyzes the conversion of (8S)-3',8-cyclo-7,8-dihydroguanosine 5'-triphosphate to cyclic pyranopterin monophosphate (cPMP). The sequence is that of Cyclic pyranopterin monophosphate synthase from Klebsiella pneumoniae (strain 342).